We begin with the raw amino-acid sequence, 170 residues long: MDLKKYVTIVPDYPKEGVQFKDITTLMDKGDVYRYATDQIVTYAKEKEIDLVVGPEARGFIIGCPVAYALGVGFAPVRKEGKLPREVIKVDYGLEYGKDVLTIHKDAIKPGQRVLITDDLLATGGTIEATIKLVEELGGVVAGIAFLIELTYLEGRNKLDGYDILTLMQY.

It belongs to the purine/pyrimidine phosphoribosyltransferase family. Homodimer.

Its subcellular location is the cytoplasm. It catalyses the reaction AMP + diphosphate = 5-phospho-alpha-D-ribose 1-diphosphate + adenine. The protein operates within purine metabolism; AMP biosynthesis via salvage pathway; AMP from adenine: step 1/1. Catalyzes a salvage reaction resulting in the formation of AMP, that is energically less costly than de novo synthesis. In Bacillus licheniformis (strain ATCC 14580 / DSM 13 / JCM 2505 / CCUG 7422 / NBRC 12200 / NCIMB 9375 / NCTC 10341 / NRRL NRS-1264 / Gibson 46), this protein is Adenine phosphoribosyltransferase.